A 386-amino-acid chain; its full sequence is LL-diaminopimelate aminotransferase (386 aa).

Substrate-binding residues include Tyr13 and Gly38. Residues Tyr67, 101 to 102 (SK), Tyr126, Asn176, Tyr207, and 235 to 237 (SLS) each bind pyridoxal 5'-phosphate. Substrate-binding residues include Lys102, Tyr126, and Asn176. At Lys238 the chain carries N6-(pyridoxal phosphate)lysine. Position 246 (Arg246) interacts with pyridoxal 5'-phosphate. Arg364 contacts substrate.

Belongs to the class-I pyridoxal-phosphate-dependent aminotransferase family. LL-diaminopimelate aminotransferase subfamily. Homodimer. Pyridoxal 5'-phosphate is required as a cofactor.

It carries out the reaction (2S,6S)-2,6-diaminopimelate + 2-oxoglutarate = (S)-2,3,4,5-tetrahydrodipicolinate + L-glutamate + H2O + H(+). The protein operates within amino-acid biosynthesis; L-lysine biosynthesis via DAP pathway; LL-2,6-diaminopimelate from (S)-tetrahydrodipicolinate (aminotransferase route): step 1/1. Its function is as follows. Involved in the synthesis of meso-diaminopimelate (m-DAP or DL-DAP), required for both lysine and peptidoglycan biosynthesis. Catalyzes the direct conversion of tetrahydrodipicolinate to LL-diaminopimelate. This chain is LL-diaminopimelate aminotransferase, found in Natranaerobius thermophilus (strain ATCC BAA-1301 / DSM 18059 / JW/NM-WN-LF).